We begin with the raw amino-acid sequence, 594 residues long: Elongation factor 4 (594 aa).

In terms of domain architecture, tr-type G spans 2 to 184 (KNIRNFSIIA…TIVAKVPAPE (183 aa)). Residues 14-19 (DHGKST) and 131-134 (NKID) contribute to the GTP site.

This sequence belongs to the TRAFAC class translation factor GTPase superfamily. Classic translation factor GTPase family. LepA subfamily.

The protein resides in the cell inner membrane. The enzyme catalyses GTP + H2O = GDP + phosphate + H(+). Required for accurate and efficient protein synthesis under certain stress conditions. May act as a fidelity factor of the translation reaction, by catalyzing a one-codon backward translocation of tRNAs on improperly translocated ribosomes. Back-translocation proceeds from a post-translocation (POST) complex to a pre-translocation (PRE) complex, thus giving elongation factor G a second chance to translocate the tRNAs correctly. Binds to ribosomes in a GTP-dependent manner. This chain is Elongation factor 4, found in Francisella tularensis subsp. tularensis (strain WY96-3418).